A 588-amino-acid chain; its full sequence is L-fucose isomerase (588 aa).

Residues E335 and D359 each act as proton acceptor in the active site. The Mn(2+) site is built by E335, D359, and H525.

This sequence belongs to the L-fucose isomerase family. The cofactor is Mn(2+).

The protein resides in the cytoplasm. It catalyses the reaction L-fucose = L-fuculose. The protein operates within carbohydrate degradation; L-fucose degradation; L-lactaldehyde and glycerone phosphate from L-fucose: step 1/3. Its function is as follows. Converts the aldose L-fucose into the corresponding ketose L-fuculose. The sequence is that of L-fucose isomerase from Streptococcus pneumoniae (strain 70585).